The primary structure comprises 102 residues: Putative pterin-4-alpha-carbinolamine dehydratase (102 aa).

It belongs to the pterin-4-alpha-carbinolamine dehydratase family.

The enzyme catalyses (4aS,6R)-4a-hydroxy-L-erythro-5,6,7,8-tetrahydrobiopterin = (6R)-L-erythro-6,7-dihydrobiopterin + H2O. The polypeptide is Putative pterin-4-alpha-carbinolamine dehydratase (Burkholderia vietnamiensis (strain G4 / LMG 22486) (Burkholderia cepacia (strain R1808))).